A 130-amino-acid polypeptide reads, in one-letter code: Small ribosomal subunit protein uS9 (130 aa).

Belongs to the universal ribosomal protein uS9 family.

The protein is Small ribosomal subunit protein uS9 of Delftia acidovorans (strain DSM 14801 / SPH-1).